The primary structure comprises 461 residues: Bifunctional protein HldE (461 aa).

The interval methionine 1–glutamate 312 is ribokinase. Position 191–194 (asparagine 191–glutamate 194) interacts with ATP. Residue aspartate 259 is part of the active site. The segment at phenylalanine 334 to lysine 461 is cytidylyltransferase.

This sequence in the N-terminal section; belongs to the carbohydrate kinase PfkB family. In the C-terminal section; belongs to the cytidylyltransferase family. In terms of assembly, homodimer.

The catalysed reaction is D-glycero-beta-D-manno-heptose 7-phosphate + ATP = D-glycero-beta-D-manno-heptose 1,7-bisphosphate + ADP + H(+). It carries out the reaction D-glycero-beta-D-manno-heptose 1-phosphate + ATP + H(+) = ADP-D-glycero-beta-D-manno-heptose + diphosphate. The protein operates within nucleotide-sugar biosynthesis; ADP-L-glycero-beta-D-manno-heptose biosynthesis; ADP-L-glycero-beta-D-manno-heptose from D-glycero-beta-D-manno-heptose 7-phosphate: step 1/4. It functions in the pathway nucleotide-sugar biosynthesis; ADP-L-glycero-beta-D-manno-heptose biosynthesis; ADP-L-glycero-beta-D-manno-heptose from D-glycero-beta-D-manno-heptose 7-phosphate: step 3/4. Functionally, catalyzes the phosphorylation of D-glycero-D-manno-heptose 7-phosphate at the C-1 position to selectively form D-glycero-beta-D-manno-heptose-1,7-bisphosphate. In terms of biological role, catalyzes the ADP transfer from ATP to D-glycero-beta-D-manno-heptose 1-phosphate, yielding ADP-D-glycero-beta-D-manno-heptose. The polypeptide is Bifunctional protein HldE (Campylobacter jejuni subsp. jejuni serotype O:6 (strain 81116 / NCTC 11828)).